The primary structure comprises 336 residues: Palmitoyltransferase PFA3 (336 aa).

The Cytoplasmic portion of the chain corresponds to 1–6 (MNDRLS). Residues 7-29 (LTSLFPRCLTTCLYIWTAYITLT) form a helical membrane-spanning segment. The Vacuolar portion of the chain corresponds to 30-37 (RIHQIPRW). The chain crosses the membrane as a helical span at residues 38-58 (FLALTIVPTLAVALYTYYKVI). Topologically, residues 59–147 (ARGPGSPLDF…AECTGFRNQK (89 aa)) are cytoplasmic. The DHHC domain maps to 104-154 (RVCQVCHVWKPDRCHHCSSCDVCILKMDHHCPWFAECTGFRNQKFFIQFLM). A helical membrane pass occupies residues 148 to 168 (FFIQFLMYTTLYAFLVLIYTC). Topologically, residues 169–188 (YELGTWFNSGSFNRELIDFH) are vacuolar. The helical transmembrane segment at 189 to 209 (LLGVALLAVAVFISVLAFTCF) threads the bilayer. Residues 210 to 336 (SIYQVCKNQT…RASVEIIDAN (127 aa)) lie on the Cytoplasmic side of the membrane.

It belongs to the DHHC palmitoyltransferase family. PFA3 subfamily. Autopalmitoylated.

Its subcellular location is the vacuole membrane. It catalyses the reaction L-cysteinyl-[protein] + hexadecanoyl-CoA = S-hexadecanoyl-L-cysteinyl-[protein] + CoA. Its function is as follows. Palmitoyltransferase specific for VAC8. Palmitoylates VAC8 at one or more of its N-terminal cysteine residues, which is required for its proper membrane localization. This Saccharomyces cerevisiae (strain ATCC 204508 / S288c) (Baker's yeast) protein is Palmitoyltransferase PFA3 (PFA3).